Here is a 364-residue protein sequence, read N- to C-terminus: Lysophosphatidic acid receptor 1 (364 aa).

The Extracellular segment spans residues 1 to 50; it reads MAAASTSSPVISQPQFTAMNEQQCFYNESIAFFYNRSGKYLATEWNTVSK. 2 cysteine pairs are disulfide-bonded: Cys-24–Cys-190 and Cys-188–Cys-195. N-linked (GlcNAc...) asparagine glycosylation is found at Asn-27 and Asn-35. Lys-39 contacts a 1-acyl-sn-glycero-3-phosphate. The chain crosses the membrane as a helical span at residues 51-75; sequence LVMGLGITVCVFIMLANLLVMVAIY. Topologically, residues 76-83 are cytoplasmic; that stretch reads VNRRFHFP. Residues 84-107 traverse the membrane as a helical segment; the sequence is IYYLMANLAAADFFAGLAYFYLMF. Residues 108–121 lie on the Extracellular side of the membrane; the sequence is NTGPNTRRLTVSTW. The helical transmembrane segment at 122 to 144 threads the bilayer; that stretch reads LLRQGLIDTSLTASVANLLAIAI. 124-129 is a binding site for a 1-acyl-sn-glycero-3-phosphate; sequence RQGLID. Residues 145 to 163 are Cytoplasmic-facing; the sequence is ERHITVFRMQLHTRMSNRR. Residues 164-184 form a helical membrane-spanning segment; it reads VVVVIVVIWTMAIVMGAIPSV. Residues 185–204 are Extracellular-facing; sequence GWNCICDIDHCSNMAPLYSD. Residues 205–225 traverse the membrane as a helical segment; the sequence is SYLVFWAIFNLVTFVVMVVLY. Trp-210 is an a 1-acyl-sn-glycero-3-phosphate binding site. Residues 226 to 255 are Cytoplasmic-facing; sequence AHIFGYVRQRTMRMSRHSSGPRRNRDTMMS. A helical membrane pass occupies residues 256–280; the sequence is LLKTVVIVLGAFIVCWTPGLVLLLL. Residues 281–294 lie on the Extracellular side of the membrane; sequence DVCCPQCDVLAYEK. Cys-284 and Cys-287 are oxidised to a cystine. The helical transmembrane segment at 295–315 threads the bilayer; it reads FFLLLAEFNSAMNPIIYSYRD. Residues 316 to 364 are Cytoplasmic-facing; it reads KEMSATFRQILCCQRNENPNGPTEGSDRSASSLNHTILAGVHSNDHSVV. Ser-341 bears the Phosphoserine mark. Thr-351 bears the Phosphothreonine mark.

The protein belongs to the G-protein coupled receptor 1 family. In terms of assembly, interacts with RALA and GRK2. Interacts with GNAQ and GNA13. Interacts with CD14; the interaction is enhanced by exposure to bacterial lipopolysaccharide (LPS). In terms of processing, N-glycosylated. Detected in lung. Detected in oligodendrocytes in corpus callosum in brain cortex (at protein level). Expressed within the embryonic cerebral cortex, where it is enriched in the ventricular zone. In the adult brain, also expressed in oligodendrocytes, as well as Schwann cells of the peripheral nervous system. Expressed in many other tissues, including lung, heart, intestine, spleen, thymus, and stomach. No expression in liver. Detected in kidney and testis. Detected in embryonic fibroblasts. Detected in adult lung fibroblasts and lung endothelial cells. Detected in dorsal root ganglion and dorsal root. Detected in astrocytes. Detected in bone.

The protein resides in the cell surface. Its subcellular location is the cell membrane. It localises to the endosome. Receptor for lysophosphatidic acid (LPA). Plays a role in the reorganization of the actin cytoskeleton, cell migration, differentiation and proliferation, and thereby contributes to the responses to tissue damage and infectious agents. Activates downstream signaling cascades via the G(i)/G(o), G(12)/G(13), and G(q) families of heteromeric G proteins. Signaling inhibits adenylyl cyclase activity and decreases cellular cAMP levels. Signaling triggers an increase of cytoplasmic Ca(2+) levels. Activates RALA; this leads to the activation of phospholipase C (PLC) and the formation of inositol 1,4,5-trisphosphate. Signaling mediates activation of down-stream MAP kinases. Contributes to the regulation of cell shape. Promotes Rho-dependent reorganization of the actin cytoskeleton in neuronal cells and neurite retraction. Promotes the activation of Rho and the formation of actin stress fibers. Promotes formation of lamellipodia at the leading edge of migrating cells via activation of RAC1. Through its function as LPA receptor, plays a role in chemotaxis and cell migration, including responses to injury and wounding. Plays a role in triggering inflammation in response to bacterial lipopolysaccharide (LPS) via its interaction with CD14. Promotes cell proliferation in response to LPA. Inhibits the intracellular ciliogenesis pathway in response to LPA and through AKT1 activation. Required for normal skeleton development. May play a role in osteoblast differentiation. Required for normal brain development. Required for normal proliferation, survival and maturation of newly formed neurons in the adult dentate gyrus. Plays a role in pain perception and in the initiation of neuropathic pain. In Mus musculus (Mouse), this protein is Lysophosphatidic acid receptor 1 (Lpar1).